The chain runs to 342 residues: D-erythrose-4-phosphate dehydrogenase (342 aa).

NAD(+) is bound at residue R12–I13. Substrate is bound by residues S154–T156, R200, T213–K214, and R236. The active-site Nucleophile is C155. N318 contacts NAD(+).

This sequence belongs to the glyceraldehyde-3-phosphate dehydrogenase family. Epd subfamily. In terms of assembly, homotetramer.

It localises to the cytoplasm. The catalysed reaction is D-erythrose 4-phosphate + NAD(+) + H2O = 4-phospho-D-erythronate + NADH + 2 H(+). Its pathway is cofactor biosynthesis; pyridoxine 5'-phosphate biosynthesis; pyridoxine 5'-phosphate from D-erythrose 4-phosphate: step 1/5. Its function is as follows. Catalyzes the NAD-dependent conversion of D-erythrose 4-phosphate to 4-phosphoerythronate. The protein is D-erythrose-4-phosphate dehydrogenase of Klebsiella pneumoniae subsp. pneumoniae (strain ATCC 700721 / MGH 78578).